Here is a 265-residue protein sequence, read N- to C-terminus: Basic leucine zipper 6 (265 aa).

2 disordered regions span residues 1 to 24 (MAQL…SAGG) and 77 to 139 (LMSM…RDPK). Over residues 85–97 (GGSSAPGSDNGGS) the composition is skewed to low complexity. Residues 122–132 (TQEQAAATSPT) are compositionally biased toward polar residues. The bZIP domain occupies 137–189 (DPKRVKRILANRQSAQRSRVRKLQYISELERSVTTLQNEVSVLSPRVAFLDQQ). The tract at residues 139 to 158 (KRVKRILANRQSAQRSRVRK) is basic motif. The tract at residues 165–186 (LERSVTTLQNEVSVLSPRVAFL) is leucine-zipper. Residues 239–265 (LSGGLAADHAHVHGGPPPVRAEKELMS) are disordered.

In terms of tissue distribution, expressed in roots, shoots and panicles.

It localises to the nucleus. Transcription regulator. The protein is Basic leucine zipper 6 (BZIP06) of Oryza sativa subsp. japonica (Rice).